The following is a 669-amino-acid chain: DNA ligase (669 aa).

Residues 34 to 38 (DAEYD), 83 to 84 (SL), and glutamate 114 contribute to the NAD(+) site. Lysine 116 serves as the catalytic N6-AMP-lysine intermediate. Positions 137, 171, 287, and 311 each coordinate NAD(+). Positions 405, 408, 423, and 428 each coordinate Zn(2+). The BRCT domain maps to 591-669 (NVESYFAGKT…EERFLQELNK (79 aa)).

It belongs to the NAD-dependent DNA ligase family. LigA subfamily. It depends on Mg(2+) as a cofactor. Mn(2+) serves as cofactor.

It catalyses the reaction NAD(+) + (deoxyribonucleotide)n-3'-hydroxyl + 5'-phospho-(deoxyribonucleotide)m = (deoxyribonucleotide)n+m + AMP + beta-nicotinamide D-nucleotide.. DNA ligase that catalyzes the formation of phosphodiester linkages between 5'-phosphoryl and 3'-hydroxyl groups in double-stranded DNA using NAD as a coenzyme and as the energy source for the reaction. It is essential for DNA replication and repair of damaged DNA. The sequence is that of DNA ligase from Bacillus mycoides (strain KBAB4) (Bacillus weihenstephanensis).